The primary structure comprises 143 residues: Nucleoside diphosphate kinase (143 aa).

Lysine 11, phenylalanine 59, arginine 87, threonine 93, arginine 104, and asparagine 114 together coordinate ATP. Histidine 117 serves as the catalytic Pros-phosphohistidine intermediate.

This sequence belongs to the NDK family. Homotetramer. Mg(2+) is required as a cofactor.

It localises to the cytoplasm. It carries out the reaction a 2'-deoxyribonucleoside 5'-diphosphate + ATP = a 2'-deoxyribonucleoside 5'-triphosphate + ADP. The enzyme catalyses a ribonucleoside 5'-diphosphate + ATP = a ribonucleoside 5'-triphosphate + ADP. Its function is as follows. Major role in the synthesis of nucleoside triphosphates other than ATP. The ATP gamma phosphate is transferred to the NDP beta phosphate via a ping-pong mechanism, using a phosphorylated active-site intermediate. This is Nucleoside diphosphate kinase from Shewanella frigidimarina (strain NCIMB 400).